The chain runs to 470 residues: Putative ankyrin repeat protein L279 (470 aa).

ANK repeat units lie at residues Arg-119–Thr-148, Asn-149–Lys-178, Glu-372–Glu-401, and Asn-403–Leu-431.

This Acanthamoeba polyphaga (Amoeba) protein is Putative ankyrin repeat protein L279.